A 1100-amino-acid chain; its full sequence is Exportin-T (1100 aa).

This sequence belongs to the exportin family. As to quaternary structure, interacts with GSP1, GSP2, NSP1, NUP2 and UTP8.

The protein resides in the nucleus. It is found in the cytoplasm. Functionally, tRNA nucleus export receptor which facilitates tRNA translocation across the nuclear pore complex. Preferentially interacts with tRNAs with mature 5'- and 3'-termini and does not distinguish between intron-containing and spliced tRNAs. In the nucleus binds to tRNA and to the Ran-GTPases GSP1 or GSP2 in their active GTP-bound form. Docking of this trimeric complex to the nuclear pore complex (NPC) is mediated through binding to nucleoporins. Upon transit of a nuclear export complex into the cytoplasm, disassembling of the complex and hydrolysis of Ran-GTP to Ran-GDP cause release of the tRNA from the export receptor. The directionality of nuclear export is thought to be conferred by an asymmetric distribution of the GTP- and GDP-bound forms of Ran between the cytoplasm and nucleus. Involved in pre-tRNA splicing, probably by affecting the interaction of pre-tRNA with splicing endonuclease. This is Exportin-T (LOS1) from Saccharomyces cerevisiae (strain YJM789) (Baker's yeast).